Consider the following 199-residue polypeptide: Protein-methionine-sulfoxide reductase heme-binding subunit MsrQ (199 aa).

5 helical membrane-spanning segments follow: residues 13 to 33 (VLLH…VDQG), 79 to 99 (LLGL…ALLE), 120 to 140 (LGII…QIMM), 147 to 167 (WQKL…HYLW), and 169 to 189 (VKTL…LLLL).

The protein belongs to the MsrQ family. In terms of assembly, heterodimer of a catalytic subunit (MsrP) and a heme-binding subunit (MsrQ). It depends on FMN as a cofactor. Heme b serves as cofactor.

It localises to the cell inner membrane. In terms of biological role, part of the MsrPQ system that repairs oxidized periplasmic proteins containing methionine sulfoxide residues (Met-O), using respiratory chain electrons. Thus protects these proteins from oxidative-stress damage caused by reactive species of oxygen and chlorine generated by the host defense mechanisms. MsrPQ is essential for the maintenance of envelope integrity under bleach stress, rescuing a wide series of structurally unrelated periplasmic proteins from methionine oxidation. MsrQ provides electrons for reduction to the reductase catalytic subunit MsrP, using the quinone pool of the respiratory chain. This Pectobacterium atrosepticum (strain SCRI 1043 / ATCC BAA-672) (Erwinia carotovora subsp. atroseptica) protein is Protein-methionine-sulfoxide reductase heme-binding subunit MsrQ.